The primary structure comprises 338 residues: RNA 3'-terminal phosphate cyclase (338 aa).

ATP contacts are provided by residues glutamine 103 and tyrosine 283 to glutamine 287. The active-site Tele-AMP-histidine intermediate is the histidine 308.

This sequence belongs to the RNA 3'-terminal cyclase family. Type 1 subfamily.

It is found in the cytoplasm. The enzyme catalyses a 3'-end 3'-phospho-ribonucleotide-RNA + ATP = a 3'-end 2',3'-cyclophospho-ribonucleotide-RNA + AMP + diphosphate. Catalyzes the conversion of 3'-phosphate to a 2',3'-cyclic phosphodiester at the end of RNA. The mechanism of action of the enzyme occurs in 3 steps: (A) adenylation of the enzyme by ATP; (B) transfer of adenylate to an RNA-N3'P to produce RNA-N3'PP5'A; (C) and attack of the adjacent 2'-hydroxyl on the 3'-phosphorus in the diester linkage to produce the cyclic end product. The biological role of this enzyme is unknown but it is likely to function in some aspects of cellular RNA processing. The polypeptide is RNA 3'-terminal phosphate cyclase (Shigella boydii serotype 18 (strain CDC 3083-94 / BS512)).